The chain runs to 462 residues: Tissue alpha-L-fucosidase (462 aa).

The first 28 residues, Met-1 to Leu-28, serve as a signal peptide directing secretion. Asn-237, Asn-264, and Asn-378 each carry an N-linked (GlcNAc...) asparagine glycan.

It belongs to the glycosyl hydrolase 29 family. In terms of assembly, homotetramer.

It is found in the lysosome. The catalysed reaction is an alpha-L-fucoside + H2O = L-fucose + an alcohol. It carries out the reaction a neolactoside IV(2)-alpha-Fuc-nLc4Cer(d18:1(4E)) + H2O = a neolactoside nLc4Cer(d18:1(4E)) + L-fucose. The enzyme catalyses a neolactoside IV(2)-alpha-Fuc-nLc4Cer(d18:0) + H2O = a neolactoside nLc4Cer(d18:0) + L-fucose. In terms of biological role, alpha-L-fucosidase is responsible for hydrolyzing the alpha-1,6-linked fucose joined to the reducing-end N-acetylglucosamine of the carbohydrate moieties of glycoproteins. The polypeptide is Tissue alpha-L-fucosidase (Fuca1) (Rattus norvegicus (Rat)).